A 2355-amino-acid chain; its full sequence is Acetyl-CoA carboxylase 2 (2355 aa).

The Biotin carboxylation domain maps to Pro138–Ala645. The region spanning Gly291–Ile485 is the ATP-grasp domain. Residue Cys317–Leu374 participates in ATP binding. Mg(2+) contacts are provided by Glu440, Glu454, and Asn456. Mn(2+) is bound by residues Glu440, Glu454, and Asn456. Residue Arg458 is part of the active site. Residues Leu772–Asp846 enclose the Biotinyl-binding domain. At Lys813 the chain carries N6-biotinyllysine. Thr1133 carries the phosphothreonine modification. Ser1293 is subject to Phosphoserine. Residues Gln1593–Ala1932 enclose the CoA carboxyltransferase N-terminal domain. A carboxyltransferase region spans residues Gln1593–Lys2251. CoA is bound by residues Arg1841, Lys2142, and Arg2144. The CoA carboxyltransferase C-terminal domain occupies Pro1936–Lys2251.

In terms of assembly, homodimer. Biotin is required as a cofactor. Requires Mg(2+) as cofactor. It depends on Mn(2+) as a cofactor. In terms of tissue distribution, widely expressed at low levels.

The protein localises to the cytoplasm. It localises to the cytosol. The catalysed reaction is hydrogencarbonate + acetyl-CoA + ATP = malonyl-CoA + ADP + phosphate + H(+). It carries out the reaction N(6)-biotinyl-L-lysyl-[protein] + hydrogencarbonate + ATP = N(6)-carboxybiotinyl-L-lysyl-[protein] + ADP + phosphate + H(+). The protein operates within lipid metabolism; malonyl-CoA biosynthesis; malonyl-CoA from acetyl-CoA: step 1/1. Functionally, multifunctional enzyme that catalyzes the carboxylation of acetyl-CoA, forming malonyl-CoA, which is used in the plastid for fatty acid synthesis and in the cytosol in various biosynthetic pathways including fatty acid elongation. The sequence is that of Acetyl-CoA carboxylase 2 (ACC2) from Arabidopsis thaliana (Mouse-ear cress).